Here is a 689-residue protein sequence, read N- to C-terminus: Protein SDA1 homolog (689 aa).

3 disordered regions span residues 227-260 (DEKK…TKNK), 485-512 (EQEK…DGEW), and 623-689 (TDRK…RLMK). Residues 258–319 (KNKKKLDKAM…RFEVKLMHMD (62 aa)) adopt a coiled-coil conformation. Residues 492 to 512 (PEEDDGWESASLSDDDEDGEW) show a composition bias toward acidic residues. The span at 670-681 (RDKQIALRDSLL) shows a compositional bias: basic and acidic residues.

This sequence belongs to the SDA1 family.

It is found in the nucleus. The protein localises to the nucleolus. Its function is as follows. Required for 60S pre-ribosomal subunits export to the cytoplasm. The sequence is that of Protein SDA1 homolog (sdad1) from Xenopus laevis (African clawed frog).